The chain runs to 176 residues: Translation initiation factor IF-3 (176 aa).

Belongs to the IF-3 family. In terms of assembly, monomer.

It localises to the cytoplasm. Functionally, IF-3 binds to the 30S ribosomal subunit and shifts the equilibrium between 70S ribosomes and their 50S and 30S subunits in favor of the free subunits, thus enhancing the availability of 30S subunits on which protein synthesis initiation begins. The chain is Translation initiation factor IF-3 from Streptococcus pyogenes serotype M18 (strain MGAS8232).